The primary structure comprises 633 residues: Glutamyl-tRNA(Gln) amidotransferase subunit E (633 aa).

The protein belongs to the GatB/GatE family. GatE subfamily. Heterodimer of GatD and GatE.

It carries out the reaction L-glutamyl-tRNA(Gln) + L-glutamine + ATP + H2O = L-glutaminyl-tRNA(Gln) + L-glutamate + ADP + phosphate + H(+). Functionally, allows the formation of correctly charged Gln-tRNA(Gln) through the transamidation of misacylated Glu-tRNA(Gln) in organisms which lack glutaminyl-tRNA synthetase. The reaction takes place in the presence of glutamine and ATP through an activated gamma-phospho-Glu-tRNA(Gln). The GatDE system is specific for glutamate and does not act on aspartate. This chain is Glutamyl-tRNA(Gln) amidotransferase subunit E, found in Methanosarcina barkeri (strain Fusaro / DSM 804).